The primary structure comprises 459 residues: Eukaryotic translation initiation factor 3 subunit M (459 aa).

A PCI domain is found at 207 to 384 (LDWAQTHVVD…SEFLVHRATY (178 aa)). The segment at 431–459 (AAAEGEKGDKNNKGPSERRRAPQEIAAAE) is disordered. Residues 434–452 (EGEKGDKNNKGPSERRRAP) are compositionally biased toward basic and acidic residues.

Belongs to the eIF-3 subunit M family. In terms of assembly, component of the eukaryotic translation initiation factor 3 (eIF-3) complex.

The protein localises to the cytoplasm. In terms of biological role, component of the eukaryotic translation initiation factor 3 (eIF-3) complex, which is involved in protein synthesis of a specialized repertoire of mRNAs and, together with other initiation factors, stimulates binding of mRNA and methionyl-tRNAi to the 40S ribosome. The eIF-3 complex specifically targets and initiates translation of a subset of mRNAs involved in cell proliferation. This is Eukaryotic translation initiation factor 3 subunit M from Emericella nidulans (strain FGSC A4 / ATCC 38163 / CBS 112.46 / NRRL 194 / M139) (Aspergillus nidulans).